The chain runs to 552 residues: Phosphoglucomutase (552 aa).

Catalysis depends on Ser-143, which acts as the Phosphoserine intermediate. The Mg(2+) site is built by Ser-143, Asp-295, Asp-297, and Asp-299.

The protein belongs to the phosphohexose mutase family. Mg(2+) serves as cofactor.

The catalysed reaction is alpha-D-glucose 1-phosphate = alpha-D-glucose 6-phosphate. It functions in the pathway glycolipid metabolism; diglucosyl-diacylglycerol biosynthesis. Functionally, catalyzes the interconversion between glucose-6-phosphate and alpha-glucose-1-phosphate. This is the first step in the biosynthesis of diglucosyl-diacylglycerol (Glc2-DAG), i.e. the predominant glycolipid found in the S.aureus membrane, which is also used as a membrane anchor for lipoteichoic acid (LTA). This is Phosphoglucomutase (pgcA) from Staphylococcus aureus (strain MRSA252).